Consider the following 242-residue polypeptide: MDFKILKEKLPQSNLTVVLTGAGISKESGIPTFRGEDGLWKKYNPEELATPWAFQRNPALVWEWYDYRRRIISKAKPNKCHLLIAEFEERFKNVRVITQNVDGLHEAAGSTNVIELHGNIWKVKCTKCDFRGINREVPLSKIPPECPKCGSIVRPDVVWFGEPLPSDKLTEAMELSQRADLFIVIGTSLMVQPAASLPFLALERGAFVVEVSPEETPLSRKAHLFFQMGAVEFAMKFEEKEG.

In terms of domain architecture, Deacetylase sirtuin-type spans 1 to 242 (MDFKILKEKL…FAMKFEEKEG (242 aa)). 21–40 (GAGISKESGIPTFRGEDGLW) lines the NAD(+) pocket. Positions 65 and 68 each coordinate substrate. 99-102 (QNVD) lines the NAD(+) pocket. His117 (proton acceptor) is an active-site residue. Zn(2+) is bound by residues Cys125, Cys128, Cys146, and Cys149. NAD(+) contacts are provided by residues 186-188 (GTS) and Glu241.

Belongs to the sirtuin family. Class III subfamily. The cofactor is Zn(2+).

The protein resides in the cytoplasm. The catalysed reaction is N(6)-acetyl-L-lysyl-[protein] + NAD(+) + H2O = 2''-O-acetyl-ADP-D-ribose + nicotinamide + L-lysyl-[protein]. The enzyme catalyses N(6)-succinyl-L-lysyl-[protein] + NAD(+) + H2O = 2''-O-succinyl-ADP-D-ribose + nicotinamide + L-lysyl-[protein]. NAD-dependent lysine deacetylase and desuccinylase that specifically removes acetyl and succinyl groups on target proteins. Modulates the activities of several proteins which are inactive in their acylated form. The chain is NAD-dependent protein deacylase 1 from Caldanaerobacter subterraneus subsp. tengcongensis (strain DSM 15242 / JCM 11007 / NBRC 100824 / MB4) (Thermoanaerobacter tengcongensis).